The sequence spans 835 residues: Protein P (835 aa).

The terminal protein domain (TP) stretch occupies residues 1–176 (MPLSYQHFRK…FFGTPYTWEH (176 aa)). Residues 177 to 334 (KLQHGTQPVN…HCLHHIVKLL (158 aa)) are spacer. 2 disordered regions span residues 211–235 (LGQK…WSRT) and 258–288 (RHPS…PTSH). A polymerase/reverse transcriptase domain (RT) region spans residues 335 to 680 (DDWGPCQHHG…YMHLYPVARQ (346 aa)). The region spanning 345–590 (HHFIRIPRTP…KALNFMGYVI (246 aa)) is the Reverse transcriptase domain. Positions 417, 541, and 542 each coordinate Mg(2+).

It belongs to the hepadnaviridae P protein family.

The enzyme catalyses DNA(n) + a 2'-deoxyribonucleoside 5'-triphosphate = DNA(n+1) + diphosphate. It catalyses the reaction Endonucleolytic cleavage to 5'-phosphomonoester.. Its activity is regulated as follows. Activated by host HSP70 and HSP40 in vitro to be able to bind the epsilon loop of the pgRNA. Because deletion of the RNase H region renders the protein partly chaperone-independent, the chaperones may be needed indirectly to relieve occlusion of the RNA-binding site by this domain. Inhibited by several reverse-transcriptase inhibitors: Lamivudine, Adefovir and Entecavir. In terms of biological role, multifunctional enzyme that converts the viral RNA genome into dsDNA in viral cytoplasmic capsids. This enzyme displays a DNA polymerase activity that can copy either DNA or RNA templates, and a ribonuclease H (RNase H) activity that cleaves the RNA strand of RNA-DNA heteroduplexes in a partially processive 3'- to 5'-endonucleasic mode. Neo-synthesized pregenomic RNA (pgRNA) are encapsidated together with the P protein, and reverse-transcribed inside the nucleocapsid. Initiation of reverse-transcription occurs first by binding the epsilon loop on the pgRNA genome, and is initiated by protein priming, thereby the 5'-end of (-)DNA is covalently linked to P protein. Partial (+)DNA is synthesized from the (-)DNA template and generates the relaxed circular DNA (RC-DNA) genome. After budding and infection, the RC-DNA migrates in the nucleus, and is converted into a plasmid-like covalently closed circular DNA (cccDNA). The activity of P protein does not seem to be necessary for cccDNA generation, and is presumably released from (+)DNA by host nuclear DNA repair machinery. This chain is Protein P, found in Woolly monkey hepatitis B virus (isolate Louisville) (WMHBV).